The primary structure comprises 381 residues: Probable tRNA sulfurtransferase (381 aa).

Residues 60-168 (REATEVLTRV…EGKAYIFVDK (109 aa)) form the THUMP domain. Residues 186–187 (LL), Lys269, Gly291, and Gln300 contribute to the ATP site.

The protein belongs to the ThiI family.

It localises to the cytoplasm. The catalysed reaction is [ThiI sulfur-carrier protein]-S-sulfanyl-L-cysteine + a uridine in tRNA + 2 reduced [2Fe-2S]-[ferredoxin] + ATP + H(+) = [ThiI sulfur-carrier protein]-L-cysteine + a 4-thiouridine in tRNA + 2 oxidized [2Fe-2S]-[ferredoxin] + AMP + diphosphate. It carries out the reaction [ThiS sulfur-carrier protein]-C-terminal Gly-Gly-AMP + S-sulfanyl-L-cysteinyl-[cysteine desulfurase] + AH2 = [ThiS sulfur-carrier protein]-C-terminal-Gly-aminoethanethioate + L-cysteinyl-[cysteine desulfurase] + A + AMP + 2 H(+). The protein operates within cofactor biosynthesis; thiamine diphosphate biosynthesis. Functionally, catalyzes the ATP-dependent transfer of a sulfur to tRNA to produce 4-thiouridine in position 8 of tRNAs, which functions as a near-UV photosensor. Also catalyzes the transfer of sulfur to the sulfur carrier protein ThiS, forming ThiS-thiocarboxylate. This is a step in the synthesis of thiazole, in the thiamine biosynthesis pathway. The sulfur is donated as persulfide by IscS. The protein is Probable tRNA sulfurtransferase of Thermococcus kodakarensis (strain ATCC BAA-918 / JCM 12380 / KOD1) (Pyrococcus kodakaraensis (strain KOD1)).